We begin with the raw amino-acid sequence, 135 residues long: MRNVTSLGWQYLRAFVIIYLCLWAGKAVTLLLPISIPGSILGMLILFALLSSQILPSTWVKPGCHLLIRYMALLFVPIGVGVMQYYDQLTKQFGPIVVSCFVSTLVVMLVVGYSSHYVHRERKVMGSPTHTEEDK.

A run of 4 helical transmembrane segments spans residues 4-24, 30-50, 63-83, and 93-113; these read VTSL…CLWA, LLLP…FALL, GCHL…VGVM, and FGPI…VVGY.

The protein belongs to the UPF0299 family.

It is found in the cell inner membrane. The polypeptide is UPF0299 membrane protein YE2790 (Yersinia enterocolitica serotype O:8 / biotype 1B (strain NCTC 13174 / 8081)).